A 352-amino-acid polypeptide reads, in one-letter code: 4-hydroxy-2-oxovalerate aldolase (352 aa).

One can recognise a Pyruvate carboxyltransferase domain in the interval 14-266 (VRMTDTSLRD…KTGIDFFDIA (253 aa)). 22-23 (RD) is a substrate binding site. Asp23 is a binding site for Mn(2+). His26 serves as the catalytic Proton acceptor. Ser176 and His205 together coordinate substrate. 2 residues coordinate Mn(2+): His205 and His207. Position 296 (Tyr296) interacts with substrate.

It belongs to the 4-hydroxy-2-oxovalerate aldolase family.

The catalysed reaction is (S)-4-hydroxy-2-oxopentanoate = acetaldehyde + pyruvate. The sequence is that of 4-hydroxy-2-oxovalerate aldolase from Mycolicibacterium gilvum (strain PYR-GCK) (Mycobacterium gilvum (strain PYR-GCK)).